The chain runs to 862 residues: Aldehyde-alcohol dehydrogenase (862 aa).

Cysteine 244 is an active-site residue. Glycine 420–asparagine 425 provides a ligand contact to NAD(+).

This sequence in the N-terminal section; belongs to the aldehyde dehydrogenase family. It in the C-terminal section; belongs to the iron-containing alcohol dehydrogenase family.

The enzyme catalyses a primary alcohol + NAD(+) = an aldehyde + NADH + H(+). It carries out the reaction a secondary alcohol + NAD(+) = a ketone + NADH + H(+). The catalysed reaction is an aldehyde + NAD(+) + H2O = a carboxylate + NADH + 2 H(+). Has both aldehyde and alcohol dehydrogenase activities. Can use acetaldehyde, butyraldehyde, butanol and ethanol. This chain is Aldehyde-alcohol dehydrogenase, found in Clostridium acetobutylicum (strain ATCC 824 / DSM 792 / JCM 1419 / IAM 19013 / LMG 5710 / NBRC 13948 / NRRL B-527 / VKM B-1787 / 2291 / W).